The primary structure comprises 676 residues: Polyunsaturated fatty acid lipoxygenase ALOX15B (676 aa).

A PLAT domain is found at 2–124; sequence AEFRVRVSTG…TLVLQEGTAK (123 aa). The Ca(2+) site is built by G15, G17, D39, N40, G42, E44, D85, and A86. The 552-residue stretch at 125-676 folds into the Lipoxygenase domain; it reads VSWADHHPVL…PPLIENSVSI (552 aa). Fe cation is bound by residues H373, H378, H553, and I676.

It belongs to the lipoxygenase family. It depends on Fe cation as a cofactor. Expressed in hair, prostate, lung, ovary, lymph node, spinal cord and cornea.

The protein localises to the nucleus. It localises to the cytoplasm. It is found in the cytosol. Its subcellular location is the cell membrane. The protein resides in the cytoskeleton. The protein localises to the membrane. It localises to the cell junction. It is found in the adherens junction. Its subcellular location is the focal adhesion. The enzyme catalyses (5Z,8Z,11Z,14Z)-eicosatetraenoate + O2 = (15S)-hydroperoxy-(5Z,8Z,11Z,13E)-eicosatetraenoate. It catalyses the reaction (9Z,12Z)-octadecadienoate + O2 = 13-hydroperoxy-(9Z,11E)-octadecadienoate. The catalysed reaction is (5S)-hydroxy-(6E,8Z,11Z,14Z)-eicosatetraenoate + O2 = (5S)-hydroxy-(15S)-hydroperoxy-(6E,8Z,11Z,13E)-eicosatetraenoate. It carries out the reaction (5Z,8Z,11Z,14Z)-eicosatetraenoate + O2 = 5-hydroperoxy-(6E,8Z,11Z,14Z)-eicosatetraenoate. The enzyme catalyses (5S,6R)-dihydroxy-(7E,9E,11Z,14Z)-eicosatetraenoate + O2 = (5S,6R)-dihydroxy-(15S)-hydroperoxy-(7E,9E,11Z,13E)-eicosatetraenoate. It catalyses the reaction (5S)-hydroperoxy-(6E,8Z,11Z,14Z)-eicosatetraenoate + O2 = (5S,15S)-dihydroperoxy-(6E,8Z,11Z,13E)-eicosatetraenoate. The catalysed reaction is 2-(5Z,8Z,11Z,14Z-eicosatetraenoyl)-glycerol + O2 = 2-[15(S)-hydroperoxy-(5Z,8Z,11Z,13E)-eicosatetraenoyl]-glycerol. It carries out the reaction (8S)-hydroperoxy-(5Z,9E,11Z,14Z)-eicosatetraenoate + O2 = (8S,15S)-dihydroperoxy-(5Z,9E,11Z,13E)-eicosatetraenoate. The enzyme catalyses N-(5Z,8Z,11Z,14Z)-eicosatetraenoyl-L-alanine + O2 = N-(15S)-hydroperoxy-(5Z,8Z,11Z,13E)-eicosatetraenoyl-alanine. It catalyses the reaction N-(5Z,8Z,11Z,14Z)-eicosatetraenoyl-gamma-aminobutanoate + O2 = N-(15S)-hydroperoxy-(5Z,8Z,11Z,13E)-eicosatetraenoyl-gamma-aminobutanoate. The catalysed reaction is N-(5Z,8Z,11Z,14Z)-eicosatetraenoyl-glycine + O2 = N-(15S)-hydroperoxy-(5Z,8Z,11Z,13E)-eicosatetraenoyl-glycine. It carries out the reaction N-(5Z,8Z,11Z,14Z)-eicosatetraenoyl-taurine + O2 = N-(15S)-hydroperoxy-(5Z,8Z,11Z,13E)-eicosatetraenoyl-taurine. The enzyme catalyses 2-(5Z,8Z,11Z,14Z-eicosatetraenoyl)-glycerol + O2 = 2-[12-hydroperoxy-(5Z,8Z,10E,14Z)-eicosatetraenoyl]-glycerol. It catalyses the reaction 1-octadecanoyl-2-(5Z,8Z,11Z,14Z-eicosatetraenoyl)-sn-glycero-3-phosphocholine + O2 = 1-octadecanoyl-2-(15-hydroperoxy-5Z,8Z,11Z,13E-eicosatetraenoyl)-sn-glycero-3-phosphocholine. The catalysed reaction is a 1-acyl-2-(5Z,8Z,11Z,14Z-eicosatetraenoyl)-sn-glycero-3-phospho-(1D-myo-inositol) + O2 = a 1-acyl-2-(15-hydroperoxy-5Z,8Z,11Z,13E-eicosatetraenoyl)-sn-glycero-3-phospho-(1D-myo-inositol). It carries out the reaction a 1-acyl-2-(8Z,11Z,14Z-eicosatrienoyl)-sn-glycero-3-phospho-(1D-myo-inositol) + O2 = a 1-acyl-2-(15-hydroperoxy-8Z,11Z,13E-eicosatrienoyl)-sn-glycero-3-phospho-(1D-myo-inositol). The enzyme catalyses 1-octadecanoyl-2-(5Z,8Z,11Z,14Z)-eicosatetraenoyl-sn-glycero-3-phosphoethanolamine + O2 = 1-octadecanoyl-2-(15-hydroperoxy-5Z,8Z,11Z,13E-eicosatetraenoyl)-sn-glycero-3-phosphoethanolamine. It catalyses the reaction 1-octadecanoyl-2-(5Z,8Z,11Z,14Z-eicosatetraenoyl)-sn-glycero-3-phospho-(1D-myo-inositol) + O2 = 1-octadecanoyl-2-(15-hydroperoxy-5Z,8Z,11Z,13E-eicosatetraenoyl)-sn-glycero-3-phospho-(1D-myo-inositol). The catalysed reaction is (8Z,11Z,14Z)-eicosatrienoate + O2 = 15-hydroperoxy-(8Z,11Z,13E)-eicosatrienoate. It carries out the reaction (7S)-hydroperoxy-(4Z,8E,10Z,13Z,16Z,19Z)-docosahexaenoate + O2 = (7S,17S)-dihydroperoxy-(4Z,8E,10Z,13Z,15E,19Z)-docosahexaenoate. The enzyme catalyses (5Z,8Z,11Z,14Z)-eicosatetraenoate + O2 = 15-hydroperoxy-(5Z,8Z,11Z,13E)-eicosatetraenoate. Its pathway is lipid metabolism; hydroperoxy eicosatetraenoic acid biosynthesis. Non-heme iron-containing dioxygenase that catalyzes the stereo-specific peroxidation of free and esterified polyunsaturated fatty acids (PUFAs) generating a spectrum of bioactive lipid mediators. It inserts peroxyl groups at C15 of arachidonate ((5Z,8Z,11Z,14Z)-eicosatetraenoate) producing (15S)-hydroperoxyeicosatetraenoate/(15S)-HPETE. Also peroxidizes linoleate ((9Z,12Z)-octadecadienoate) to 13-hydroperoxyoctadecadienoate/13-HPODE. Oxygenates arachidonyl derivatives such as 2-arachidonoylglycerol (2-AG) leading to the production and extracellular release of 15-hydroxyeicosatetraenoyl glycerol (15-HETE-G) that acts as a peroxisome proliferator-activated receptor alpha agonist. Has the ability to efficiently class-switch ALOX5 pro-inflammatory mediators into anti-inflammatory intermediates. Participates in the sequential oxidations of DHA ((4Z,7Z,10Z,13Z,16Z,19Z)-docosahexaenoate) to generate specialized pro-resolving mediators (SPMs) resolvin D5 ((7S,17S)-diHPDHA), which can actively down-regulate the immune response and have anti-aggregation properties with platelets. In addition to free PUFAs hydrolyzed from phospholipids, it directly oxidizes PUFAs esterified to membrane-bound phospholipids. Has no detectable 8S-lipoxygenase activity on arachidonate but reacts with (8S)-HPETE to produce (8S,15S)-diHPETE. May regulate progression through the cell cycle and cell proliferation. May also regulate cytokine secretion by macrophages and therefore play a role in the immune response. May also regulate macrophage differentiation into proatherogenic foam cells. In terms of biological role, does not convert arachidonic acid to 15S-hydroperoxyeicosatetraenoic acid/(15S)-HPETE. The protein is Polyunsaturated fatty acid lipoxygenase ALOX15B of Homo sapiens (Human).